A 125-amino-acid chain; its full sequence is MRLAGVNLPLNKHAVIALTYVYGIGNTSAKNILAKAGVAPDKKISELSDEEAHAIREIIGNEYTVEGEARAEQQLSIKRLMDIGCYRGLRHRRSLPVRGQRTRTNARTRKGKRKTVAGKKKAGKK.

Residues 93 to 125 form a disordered region; that stretch reads RSLPVRGQRTRTNARTRKGKRKTVAGKKKAGKK.

The protein belongs to the universal ribosomal protein uS13 family. Part of the 30S ribosomal subunit. Forms a loose heterodimer with protein S19. Forms two bridges to the 50S subunit in the 70S ribosome.

Located at the top of the head of the 30S subunit, it contacts several helices of the 16S rRNA. In the 70S ribosome it contacts the 23S rRNA (bridge B1a) and protein L5 of the 50S subunit (bridge B1b), connecting the 2 subunits; these bridges are implicated in subunit movement. Contacts the tRNAs in the A and P-sites. The sequence is that of Small ribosomal subunit protein uS13 from Chlorobaculum tepidum (strain ATCC 49652 / DSM 12025 / NBRC 103806 / TLS) (Chlorobium tepidum).